The primary structure comprises 319 residues: Putative replication factor C small subunit R395 (319 aa).

45–52 (GSPGVGKT) serves as a coordination point for ATP.

It belongs to the activator 1 small subunits family. RfcS subfamily.

Its function is as follows. Part of the RFC clamp loader complex which loads the PCNA sliding clamp onto DNA. This chain is Putative replication factor C small subunit R395, found in Acanthamoeba polyphaga mimivirus (APMV).